A 366-amino-acid chain; its full sequence is Sulfate/thiosulfate import ATP-binding protein CysA 2 (366 aa).

One can recognise an ABC transporter domain in the interval 14 to 243 (LSVHALCRRF…PASRFVAEFV (230 aa)). Residue 46–53 (GPSGCGKT) participates in ATP binding.

This sequence belongs to the ABC transporter superfamily. Sulfate/tungstate importer (TC 3.A.1.6) family. As to quaternary structure, the complex is composed of two ATP-binding proteins (CysA), two transmembrane proteins (CysT and CysW) and a solute-binding protein (CysP).

Its subcellular location is the cell inner membrane. The enzyme catalyses sulfate(out) + ATP + H2O = sulfate(in) + ADP + phosphate + H(+). The catalysed reaction is thiosulfate(out) + ATP + H2O = thiosulfate(in) + ADP + phosphate + H(+). Its function is as follows. Part of the ABC transporter complex CysAWTP involved in sulfate/thiosulfate import. Responsible for energy coupling to the transport system. The chain is Sulfate/thiosulfate import ATP-binding protein CysA 2 from Chromobacterium violaceum (strain ATCC 12472 / DSM 30191 / JCM 1249 / CCUG 213 / NBRC 12614 / NCIMB 9131 / NCTC 9757 / MK).